We begin with the raw amino-acid sequence, 122 residues long: MHAPSQIRLTFNQDHPEPHEHEDEGAGLAVQESKPVLQPPPLYKVVLFNDDYTPMDFVVEVLEVFFNMDREKATKIMLTVHTQGKAVCGLFTRDVAETKAMQVNQYARESQHPLLCEIEKDS.

The disordered stretch occupies residues 1-33; that stretch reads MHAPSQIRLTFNQDHPEPHEHEDEGAGLAVQES. A compositionally biased stretch (basic and acidic residues) spans 14-24; sequence DHPEPHEHEDE.

This sequence belongs to the ClpS family. In terms of assembly, binds to the N-terminal domain of the chaperone ClpA.

In terms of biological role, involved in the modulation of the specificity of the ClpAP-mediated ATP-dependent protein degradation. The sequence is that of ATP-dependent Clp protease adapter protein ClpS from Pseudomonas aeruginosa (strain ATCC 15692 / DSM 22644 / CIP 104116 / JCM 14847 / LMG 12228 / 1C / PRS 101 / PAO1).